The primary structure comprises 229 residues: Ribonuclease 3 (229 aa).

The RNase III domain occupies 4–133 (WEELQESVGF…FIGALYLDNG (130 aa)). Residue Glu-46 coordinates Mg(2+). Asp-50 is an active-site residue. Residues Asp-119 and Glu-122 each coordinate Mg(2+). The active site involves Glu-122. The region spanning 159 to 228 (DYKTQLQEIV…AQFAINQLTH (70 aa)) is the DRBM domain.

Belongs to the ribonuclease III family. In terms of assembly, homodimer. Mg(2+) serves as cofactor.

The protein resides in the cytoplasm. The catalysed reaction is Endonucleolytic cleavage to 5'-phosphomonoester.. In terms of biological role, digests double-stranded RNA. Involved in the processing of primary rRNA transcript to yield the immediate precursors to the large and small rRNAs (23S and 16S). Processes some mRNAs, and tRNAs when they are encoded in the rRNA operon. Processes pre-crRNA and tracrRNA of type II CRISPR loci if present in the organism. The chain is Ribonuclease 3 from Listeria monocytogenes serotype 4b (strain CLIP80459).